Reading from the N-terminus, the 656-residue chain is Phosphatidylinositol 4,5-bisphosphate-binding protein SLM2 (656 aa).

One can recognise a PH domain in the interval 445-555; that stretch reads FEVKSGFLEK…WFGNIKALSS (111 aa). The tract at residues 577–605 is disordered; sequence AKSNENTTESVTPQVTNEQHTRYDDVSSS. Residues 580 to 594 show a composition bias toward polar residues; that stretch reads NENTTESVTPQVTNE. Ser-626 carries the phosphoserine modification. The PXIXIT-like, required for interaction with CNA1 and CNA2, and calcineurin-dependent dephosphorylation signature appears at 640–645; sequence PEFYIE. 2 positions are modified to phosphoserine: Ser-649 and Ser-653.

In terms of assembly, heterodimer of SLM1-SLM2. Binds phosphatidylinositol 4,5-bisphosphate, which is required for function. Interacts with the TORC2 subunits AVO2, BIT61 and TOR2. Interacts with the calcineurin catalytic subunits CNA1 and CNA2.

Its subcellular location is the cell membrane. Functionally, together with SLM1, effector of the TORC2- and calcineurin-signaling pathways. Phosphorylated and activated by TORC2 under favorable growth conditions. Mediates actin polarization via inhibition of calcineurin-dependent transcription. Upon nutrient limitation or environmental stress, gets dephosphorylated by calcineurin, inhibiting interaction with TORC2, thereby antagonizing TORC2 signaling and mediating calcineurin-dependent actin depolarization. Also functions in heat-induced, calcineurin-mediated uracil permease (FUR4) endocytosis. This Saccharomyces cerevisiae (strain ATCC 204508 / S288c) (Baker's yeast) protein is Phosphatidylinositol 4,5-bisphosphate-binding protein SLM2 (SLM2).